Reading from the N-terminus, the 89-residue chain is Small ribosomal subunit protein uS15 (89 aa).

The protein belongs to the universal ribosomal protein uS15 family. In terms of assembly, part of the 30S ribosomal subunit. Forms a bridge to the 50S subunit in the 70S ribosome, contacting the 23S rRNA.

One of the primary rRNA binding proteins, it binds directly to 16S rRNA where it helps nucleate assembly of the platform of the 30S subunit by binding and bridging several RNA helices of the 16S rRNA. Its function is as follows. Forms an intersubunit bridge (bridge B4) with the 23S rRNA of the 50S subunit in the ribosome. This chain is Small ribosomal subunit protein uS15, found in Acaryochloris marina (strain MBIC 11017).